Here is an 809-residue protein sequence, read N- to C-terminus: Phospholipase D alpha 1 (809 aa).

One can recognise a C2 domain in the interval 1 to 125 (MAQILLHGTL…LDGHEIDKWV (125 aa)). D186 is a binding site for Ca(2+). Residues 326-365 (TMFTHHQKIVVVDSALPGGGGSDKRRIVSFVGGLDLCDGR) enclose the PLD phosphodiesterase 1 domain. Residues H331, K333, and D338 contribute to the active site. A 1,2-diacyl-sn-glycero-3-phosphate is bound at residue H331. Positions 371 and 405 each coordinate Ca(2+). Q521 and H660 together coordinate a 1,2-diacyl-sn-glycero-3-phosphate. Residues 655-682 (FMIYVHTKMMIVDDEYIIIGSANINQRS) form the PLD phosphodiesterase 2 domain. Residues H660, K662, and D667 contribute to the active site. E721 serves as a coordination point for Ca(2+).

This sequence belongs to the phospholipase D family. C2-PLD subfamily. The cofactor is Ca(2+).

It carries out the reaction a 1,2-diacyl-sn-glycero-3-phosphocholine + H2O = a 1,2-diacyl-sn-glycero-3-phosphate + choline + H(+). In terms of biological role, hydrolyzes glycerol-phospholipids at the terminal phosphodiesteric bond. Plays an important role in various cellular processes. This chain is Phospholipase D alpha 1 (PLD1), found in Vigna unguiculata (Cowpea).